Here is a 1012-residue protein sequence, read N- to C-terminus: Autotransporter adhesin BpaC (1012 aa).

The signal sequence occupies residues 1–71 (MNRIFKSIWC…PFAEEAMAAN (71 aa)). The surface exposed passenger domain stretch occupies residues 72–921 (NAGVCLTYNG…VGQLNSAVSG (850 aa)). 2 disordered regions span residues 420–746 (GLQG…AGAT) and 785–809 (ENSTANGANSTASGNGSSAFGESAA). Residues 427–442 (ANTGTASGDNSTASGD) are compositionally biased toward polar residues. Residues 443-504 (NATASGTNST…ANGTNSTASG (62 aa)) show a composition bias toward low complexity. The segment covering 505 to 519 (DNSTASGTNASATGE) has biased composition (polar residues). Over residues 520–588 (NSTATGTDST…ANGTNSTASG (69 aa)) the composition is skewed to low complexity. Over residues 589-603 (DNSTASGTNASATGE) the composition is skewed to polar residues. Positions 604–630 (NSTATGTDSTASGSNSTANGTNSTASG) are enriched in low complexity. The span at 631–645 (DNSTASGTNASATGE) shows a compositional bias: polar residues. Composition is skewed to low complexity over residues 646-700 (NSTA…TASG) and 708-746 (TNASATGENSTATGTASTASGSNSTANGANSTASGAGAT). Positions 922-959 (IRNQMDGMQGQIDTLARDAYSGIAAATALTMIPDVDPG) are outer membrane translocation of the passenger domain. Residues 960–1012 (KTLAVGIGTANFKGYQASALGATARITQNLKVKTGVSYSGSNYVWGAGMSYQW) are translocator domain.

The protein belongs to the autotransporter-2 (AT-2) (TC 1.B.40) family. Homotrimer.

It is found in the cell surface. Its subcellular location is the cell outer membrane. In terms of biological role, involved in virulence. Mediates adherence to human respiratory epithelial cells. This chain is Autotransporter adhesin BpaC, found in Burkholderia mallei (strain ATCC 23344).